Consider the following 379-residue polypeptide: Alkanesulfonate monooxygenase (379 aa).

This sequence belongs to the SsuD family.

The enzyme catalyses an alkanesulfonate + FMNH2 + O2 = an aldehyde + FMN + sulfite + H2O + 2 H(+). Catalyzes the desulfonation of aliphatic sulfonates. This chain is Alkanesulfonate monooxygenase, found in Sorangium cellulosum (strain So ce56) (Polyangium cellulosum (strain So ce56)).